We begin with the raw amino-acid sequence, 313 residues long: Antiviral protein I (313 aa).

A signal peptide spans 1 to 22 (MKSMLVVTISIWLILAPTSTWA). Intrachain disulfides connect Cys-56/Cys-281 and Cys-107/Cys-128. Tyr-94 is an active-site residue. Val-95 is a binding site for substrate. Ser-143 is a substrate binding site. Residue Tyr-145 is part of the active site. Ser-197 is a substrate binding site. Residues Glu-198 and Arg-201 contribute to the active site. Arg-201 serves as a coordination point for substrate. A propeptide spanning residues 286–313 (NQNAMFPQLIMSTYYNYMVNLGDLFEGF) is cleaved from the precursor.

This sequence belongs to the ribosome-inactivating protein family. Type 1 RIP subfamily. Monomer. As to expression, expressed in spring leaves (at protein level). Expressed in roots (at protein level).

It carries out the reaction Endohydrolysis of the N-glycosidic bond at one specific adenosine on the 28S rRNA.. In terms of biological role, possesses antiviral potency. Inhibits viral infection of plants (tobacco mosaic virus). Inhibits protein synthesis. Releases both adenine and guanine from Escherichia coli rRNA in vitro. Activity on guanine is 20 times slower than that on adenine. The polypeptide is Antiviral protein I (PAP1) (Phytolacca americana (American pokeweed)).